Reading from the N-terminus, the 124-residue chain is Putative iron-sulfur cluster insertion protein ErpA 2 (124 aa).

Residues C52, C116, and C118 each coordinate iron-sulfur cluster.

It belongs to the HesB/IscA family. In terms of assembly, homodimer. Iron-sulfur cluster serves as cofactor.

In terms of biological role, required for insertion of 4Fe-4S clusters. The polypeptide is Putative iron-sulfur cluster insertion protein ErpA 2 (Burkholderia vietnamiensis (strain G4 / LMG 22486) (Burkholderia cepacia (strain R1808))).